The following is a 242-amino-acid chain: UPF0246 protein SPH_1662 (242 aa).

The protein belongs to the UPF0246 family.

This chain is UPF0246 protein SPH_1662, found in Streptococcus pneumoniae (strain Hungary19A-6).